Consider the following 278-residue polypeptide: Dermonecrotic toxin LspiSicTox-betaIE2iii (278 aa).

H5 is a catalytic residue. Mg(2+) is bound by residues E25 and D27. H41 serves as the catalytic Nucleophile. 2 disulfide bridges follow: C45-C51 and C47-C190. D85 lines the Mg(2+) pocket.

This sequence belongs to the arthropod phospholipase D family. Class II subfamily. Requires Mg(2+) as cofactor. In terms of tissue distribution, expressed by the venom gland.

Its subcellular location is the secreted. The catalysed reaction is an N-(acyl)-sphingosylphosphocholine = an N-(acyl)-sphingosyl-1,3-cyclic phosphate + choline. It catalyses the reaction an N-(acyl)-sphingosylphosphoethanolamine = an N-(acyl)-sphingosyl-1,3-cyclic phosphate + ethanolamine. The enzyme catalyses a 1-acyl-sn-glycero-3-phosphocholine = a 1-acyl-sn-glycero-2,3-cyclic phosphate + choline. It carries out the reaction a 1-acyl-sn-glycero-3-phosphoethanolamine = a 1-acyl-sn-glycero-2,3-cyclic phosphate + ethanolamine. In terms of biological role, dermonecrotic toxins cleave the phosphodiester linkage between the phosphate and headgroup of certain phospholipids (sphingolipid and lysolipid substrates), forming an alcohol (often choline) and a cyclic phosphate. This toxin acts on sphingomyelin (SM). It may also act on ceramide phosphoethanolamine (CPE), lysophosphatidylcholine (LPC) and lysophosphatidylethanolamine (LPE), but not on lysophosphatidylserine (LPS), and lysophosphatidylglycerol (LPG). It acts by transphosphatidylation, releasing exclusively cyclic phosphate products as second products. Induces dermonecrosis, hemolysis, increased vascular permeability, edema, inflammatory response, and platelet aggregation. The polypeptide is Dermonecrotic toxin LspiSicTox-betaIE2iii (Loxosceles spinulosa (Recluse spider)).